A 92-amino-acid polypeptide reads, in one-letter code: Large ribosomal subunit protein bL27 (92 aa).

A propeptide spanning residues 1 to 9 (MLVMNLQYF) is cleaved from the precursor.

The protein belongs to the bacterial ribosomal protein bL27 family. In terms of processing, the N-terminus is cleaved by ribosomal processing cysteine protease Prp.

This chain is Large ribosomal subunit protein bL27, found in Heliobacterium modesticaldum (strain ATCC 51547 / Ice1).